The sequence spans 529 residues: Bifunctional purine biosynthesis protein PurH (529 aa).

The MGS-like domain occupies 1–148 (MQQPRPVRRA…KNHKDVAIVV (148 aa)).

The protein belongs to the PurH family.

It catalyses the reaction (6R)-10-formyltetrahydrofolate + 5-amino-1-(5-phospho-beta-D-ribosyl)imidazole-4-carboxamide = 5-formamido-1-(5-phospho-D-ribosyl)imidazole-4-carboxamide + (6S)-5,6,7,8-tetrahydrofolate. The catalysed reaction is IMP + H2O = 5-formamido-1-(5-phospho-D-ribosyl)imidazole-4-carboxamide. The protein operates within purine metabolism; IMP biosynthesis via de novo pathway; 5-formamido-1-(5-phospho-D-ribosyl)imidazole-4-carboxamide from 5-amino-1-(5-phospho-D-ribosyl)imidazole-4-carboxamide (10-formyl THF route): step 1/1. It functions in the pathway purine metabolism; IMP biosynthesis via de novo pathway; IMP from 5-formamido-1-(5-phospho-D-ribosyl)imidazole-4-carboxamide: step 1/1. The chain is Bifunctional purine biosynthesis protein PurH from Cronobacter sakazakii (strain ATCC BAA-894) (Enterobacter sakazakii).